Here is a 35-residue protein sequence, read N- to C-terminus: Conotoxin Cal6.1f (35 aa).

A propeptide spanning residues 1–8 (GLIRPSKR) is cleaved from the precursor. Cystine bridges form between C9/C25, C16/C29, and C24/C34.

It belongs to the conotoxin O1 superfamily. In terms of tissue distribution, expressed by the venom duct.

It localises to the secreted. Its function is as follows. Probable neurotoxin with unknown target. Possibly targets ion channels. This chain is Conotoxin Cal6.1f, found in Californiconus californicus (California cone).